The chain runs to 1230 residues: ABC transporter B family member 5 (1230 aa).

6 helical membrane passes run 27–47 (VLLM…SPLM), 78–98 (LVYL…CWMI), 154–174 (FIQL…RGWL), 177–197 (LVML…AIIV), 253–273 (GFVT…TYAL), and 286–306 (GYTG…SIAL). The ABC transmembrane type-1 1 domain occupies 30–318 (MIVGSIGAIA…ASPCLTAFTA (289 aa)). Residues 353–589 (IELRDVCFSY…HEGAYSQLLR (237 aa)) enclose the ABC transporter 1 domain. 388 to 395 (GESGSGKS) is an ATP binding site. 3 N-linked (GlcNAc...) asparagine glycosylation sites follow: asparagine 540, asparagine 615, and asparagine 616. Positions 602-621 (ISDGSISSGSSRGNNSTRQD) are disordered. Over residues 603–617 (SDGSISSGSSRGNNS) the composition is skewed to low complexity. The next 2 membrane-spanning stretches (helical) occupy residues 662–682 (ILIL…IFGI) and 707–727 (MIFV…NYLF). Residues 663–950 (LILGTLVGAV…ASSFAPDSSK (288 aa)) enclose the ABC transmembrane type-1 2 domain. An N-linked (GlcNAc...) asparagine glycan is attached at asparagine 759. The next 3 helical transmembrane spans lie at 798 to 818 (IIAF…IPFI), 889 to 909 (GVGF…CFYV), and 924 to 944 (VFQV…ASSF). The region spanning 985 to 1223 (IELCHISFTY…EGGVYASLVQ (239 aa)) is the ABC transporter 2 domain. 1020 to 1027 (GESGSGKS) contributes to the ATP binding site. Residues asparagine 1074, asparagine 1174, and asparagine 1227 are each glycosylated (N-linked (GlcNAc...) asparagine).

This sequence belongs to the ABC transporter superfamily. ABCB family. Multidrug resistance exporter (TC 3.A.1.201) subfamily.

Its subcellular location is the membrane. This Arabidopsis thaliana (Mouse-ear cress) protein is ABC transporter B family member 5 (ABCB5).